Reading from the N-terminus, the 462-residue chain is Argininosuccinate lyase (462 aa).

The protein belongs to the lyase 1 family. Argininosuccinate lyase subfamily.

The protein resides in the cytoplasm. It carries out the reaction 2-(N(omega)-L-arginino)succinate = fumarate + L-arginine. It functions in the pathway amino-acid biosynthesis; L-arginine biosynthesis; L-arginine from L-ornithine and carbamoyl phosphate: step 3/3. This Methylobacterium nodulans (strain LMG 21967 / CNCM I-2342 / ORS 2060) protein is Argininosuccinate lyase.